The primary structure comprises 338 residues: DNA-directed RNA polymerase subunit alpha (338 aa).

The interval 1-234 (MIHKNWAELI…DQLSVFVNFD (234 aa)) is alpha N-terminal domain (alpha-NTD). Residues 250–338 (FDPRLLKKVD…DLAKRFDDQF (89 aa)) form an alpha C-terminal domain (alpha-CTD) region.

The protein belongs to the RNA polymerase alpha chain family. Homodimer. The RNAP catalytic core consists of 2 alpha, 1 beta, 1 beta' and 1 omega subunit. When a sigma factor is associated with the core the holoenzyme is formed, which can initiate transcription.

The catalysed reaction is RNA(n) + a ribonucleoside 5'-triphosphate = RNA(n+1) + diphosphate. Its function is as follows. DNA-dependent RNA polymerase catalyzes the transcription of DNA into RNA using the four ribonucleoside triphosphates as substrates. This is DNA-directed RNA polymerase subunit alpha from Paracoccus denitrificans (strain Pd 1222).